The primary structure comprises 160 residues: Transcriptional repressor NrdR (160 aa).

A zinc finger lies at 3 to 34 (CPYCQCEDTQVKDSRPAEEGAVIRRRRVCSVC). The 91-residue stretch at 49 to 139 (LLVLKKSGRR…VYRDFRNASD (91 aa)) folds into the ATP-cone domain.

Belongs to the NrdR family. It depends on Zn(2+) as a cofactor.

In terms of biological role, negatively regulates transcription of bacterial ribonucleotide reductase nrd genes and operons by binding to NrdR-boxes. This Bartonella bacilliformis (strain ATCC 35685 / KC583 / Herrer 020/F12,63) protein is Transcriptional repressor NrdR.